The following is a 397-amino-acid chain: Elongation factor Tu 1 (397 aa).

Positions 10 to 206 (KPHVNIGTIG…AIDTWIPEPV (197 aa)) constitute a tr-type G domain. The tract at residues 19-26 (GHVDHGKT) is G1. 19-26 (GHVDHGKT) contacts GTP. Thr-26 contacts Mg(2+). The interval 61–65 (GITIS) is G2. The G3 stretch occupies residues 82–85 (DCPG). GTP-binding positions include 82–86 (DCPGH) and 137–140 (NKCD). The interval 137–140 (NKCD) is G4. The G5 stretch occupies residues 175 to 177 (SAL).

The protein belongs to the TRAFAC class translation factor GTPase superfamily. Classic translation factor GTPase family. EF-Tu/EF-1A subfamily. In terms of assembly, monomer.

It localises to the cytoplasm. The enzyme catalyses GTP + H2O = GDP + phosphate + H(+). GTP hydrolase that promotes the GTP-dependent binding of aminoacyl-tRNA to the A-site of ribosomes during protein biosynthesis. This Alkaliphilus metalliredigens (strain QYMF) protein is Elongation factor Tu 1.